Reading from the N-terminus, the 707-residue chain is Tubulin polyglutamylase ttll-11 (707 aa).

Residues 124–488 (RFTIDTSRAK…PLVRDTLLLV (365 aa)) form the TTL domain. ATP-binding positions include 279–282 (QEYV), K293, and D295. Positions 675–707 (RNRSGTNGRKQNFTDDNNNPNSFAHLPKINERL) are disordered. Over residues 677–696 (RSGTNGRKQNFTDDNNNPNS) the composition is skewed to polar residues.

It belongs to the tubulin--tyrosine ligase family. In terms of tissue distribution, expressed in amphid sensory neurons. Weakly expressed in body wall muscles. Isoform a: Specifically expressed in ciliated sensory neurons in the head, including the IL1s, OLQ, head CEP, and amphid neurons. In the male tail, expressed in HOA, RnA, and phasmid neurons. Isoform b: Specifically expressed in male and hermaphrodite IL2 ciliated sensory neurons, and in male-specific CEM, HOB and RnB ciliated sensory neurons.

The protein localises to the cell projection. It is found in the axon. Its subcellular location is the perikaryon. It localises to the dendrite. The protein resides in the cilium. The protein localises to the extracellular vesicle. The catalysed reaction is L-glutamyl-[protein] + L-glutamate + ATP = gamma-L-glutamyl-L-glutamyl-[protein] + ADP + phosphate + H(+). Its function is as follows. Polyglutamylase which preferentially modifies tubulin. Involved in the side-chain initiation step of the polyglutamylation reaction. By controlling tubulin glutamylation, regulates ciliary specialization and motor-based transport. Promotes the formation of A and B tubule singlets by splaying microtubule doublets in cilia. Together with ttll-4 and 5, required for male mating. In terms of biological role, specifically promotes tubulin glutamylation in a subset of ciliated neurons including amphid, phasmid, CEP and RnA neurons. Functionally, specifically promotes tubulin glutamylation in male ciliated CEM, HOB and RnB neurons that release bioactive extracellular vesicles. Regulates the localization of TRP channel pdk-2 in male CEM, HOB and RnB neurons. Regulates the environmental release of bioactive extracellular vesicles in cilia. The protein is Tubulin polyglutamylase ttll-11 of Caenorhabditis elegans.